The primary structure comprises 264 residues: Cyclin-P1-1 (264 aa).

Residues 1–25 form a disordered region; that stretch reads MDAAAAAGGEMSRQKATASAPPPPE.

It belongs to the cyclin family. Cyclin U/P subfamily.

In Oryza sativa subsp. japonica (Rice), this protein is Cyclin-P1-1 (CYCP1-1).